The chain runs to 1030 residues: Putative pentatricopeptide repeat-containing protein At5g06400, mitochondrial (1030 aa).

A mitochondrion-targeting transit peptide spans 1 to 77; sequence MKALFRFKSC…VKLDETTRLR (77 aa). 19 PPR repeats span residues 188–222, 223–257, 258–292, 293–323, 328–362, 363–393, 397–431, 432–466, 467–501, 502–536, 677–711, 712–746, 747–783, 784–814, 818–852, 853–887, 888–922, 923–957, and 958–992; these read RVGI…GCDK, DIRT…GFEL, DATA…GITF, GLRT…MVRI, EHDA…EMCL, DAKY…MKRR, DSNV…GRPP, RVST…GIEP, DSVA…GIKP, TWKS…KIVI, NSEA…GCLI, TQDT…GLIP, SSST…GFVP, DREL…LGKI, VTVA…RSLL, DQYT…GTKP, GVHV…SCEP, SVVT…GTSP, and DFKT…GIAP.

Belongs to the PPR family. P subfamily.

It is found in the mitochondrion. This Arabidopsis thaliana (Mouse-ear cress) protein is Putative pentatricopeptide repeat-containing protein At5g06400, mitochondrial.